A 392-amino-acid chain; its full sequence is MENVLIIRYGEIMLKGDNKSFFEAKLTKHIRGAVKDLGDVKVYKMHSRVYIDVEDFNADEIIERVKKVFGVVCISPAVRFPVDFDVIKETALNQIKEEMAQRGVKTFKVESKRVDKKFPLKSPEMSREIGGYILENTEGLEVDVHNPEVRVYVEVRECSFVFTKKVYGFGGLPLGTNGKALLLLSGGIDSPVAGWLVAKRGVEIHGMHFHSYPFTSERAKEKVVDLAKILTTYCGRIKLYSVNLLAIQKEINEKCPEEEMTILSRRFMMKIAERVANKIGCDALVTGESIGQVASQTVKGLHVTNAAVELPVFRPLIAMDKVDIMDLARKIDTYETSILPFEDCCTVFLPKRPVTQPRLEKILRSEALLDVEGLIESAIGDMEVERISLDDE.

Positions 59-166 constitute a THUMP domain; the sequence is DEIIERVKKV…ECSFVFTKKV (108 aa). ATP is bound by residues 183–184, 208–209, Arg-265, Gly-287, and Gln-296; these read LL and HF.

Belongs to the ThiI family.

It is found in the cytoplasm. The catalysed reaction is [ThiI sulfur-carrier protein]-S-sulfanyl-L-cysteine + a uridine in tRNA + 2 reduced [2Fe-2S]-[ferredoxin] + ATP + H(+) = [ThiI sulfur-carrier protein]-L-cysteine + a 4-thiouridine in tRNA + 2 oxidized [2Fe-2S]-[ferredoxin] + AMP + diphosphate. It carries out the reaction [ThiS sulfur-carrier protein]-C-terminal Gly-Gly-AMP + S-sulfanyl-L-cysteinyl-[cysteine desulfurase] + AH2 = [ThiS sulfur-carrier protein]-C-terminal-Gly-aminoethanethioate + L-cysteinyl-[cysteine desulfurase] + A + AMP + 2 H(+). Its pathway is cofactor biosynthesis; thiamine diphosphate biosynthesis. Functionally, catalyzes the ATP-dependent transfer of a sulfur to tRNA to produce 4-thiouridine in position 8 of tRNAs, which functions as a near-UV photosensor. Also catalyzes the transfer of sulfur to the sulfur carrier protein ThiS, forming ThiS-thiocarboxylate. This is a step in the synthesis of thiazole, in the thiamine biosynthesis pathway. The sulfur is donated as persulfide by IscS. The polypeptide is Probable tRNA sulfurtransferase (Alkaliphilus metalliredigens (strain QYMF)).